The following is a 254-amino-acid chain: tRNA (guanine-N(1)-)-methyltransferase (254 aa).

Residues glycine 112 and 131-136 each bind S-adenosyl-L-methionine; that span reads IGDYIL.

This sequence belongs to the RNA methyltransferase TrmD family. As to quaternary structure, homodimer.

It is found in the cytoplasm. The enzyme catalyses guanosine(37) in tRNA + S-adenosyl-L-methionine = N(1)-methylguanosine(37) in tRNA + S-adenosyl-L-homocysteine + H(+). Functionally, specifically methylates guanosine-37 in various tRNAs. This Sulfurihydrogenibium sp. (strain YO3AOP1) protein is tRNA (guanine-N(1)-)-methyltransferase.